Here is a 365-residue protein sequence, read N- to C-terminus: Histidinol-phosphate aminotransferase (365 aa).

Lysine 220 bears the N6-(pyridoxal phosphate)lysine mark.

It belongs to the class-II pyridoxal-phosphate-dependent aminotransferase family. Histidinol-phosphate aminotransferase subfamily. In terms of assembly, homodimer. Pyridoxal 5'-phosphate serves as cofactor.

The enzyme catalyses L-histidinol phosphate + 2-oxoglutarate = 3-(imidazol-4-yl)-2-oxopropyl phosphate + L-glutamate. It participates in amino-acid biosynthesis; L-histidine biosynthesis; L-histidine from 5-phospho-alpha-D-ribose 1-diphosphate: step 7/9. The polypeptide is Histidinol-phosphate aminotransferase (Neisseria meningitidis serogroup A / serotype 4A (strain DSM 15465 / Z2491)).